Reading from the N-terminus, the 225-residue chain is Tryptophan synthase beta chain (225 aa).

It belongs to the TrpB family. In terms of assembly, tetramer of two alpha and two beta chains. Pyridoxal 5'-phosphate is required as a cofactor.

The catalysed reaction is (1S,2R)-1-C-(indol-3-yl)glycerol 3-phosphate + L-serine = D-glyceraldehyde 3-phosphate + L-tryptophan + H2O. It participates in amino-acid biosynthesis; L-tryptophan biosynthesis; L-tryptophan from chorismate: step 5/5. The beta subunit is responsible for the synthesis of L-tryptophan from indole and L-serine. In Buchnera aphidicola subsp. Rhopalosiphum maidis, this protein is Tryptophan synthase beta chain (trpB).